We begin with the raw amino-acid sequence, 339 residues long: DNA-directed RNA polymerase subunit alpha (339 aa).

Positions 1–235 (MTIQKNWQEL…DQLNVFVNFE (235 aa)) are alpha N-terminal domain (alpha-NTD). Residues 251-339 (FNPAFLKKVD…ELAKRFEDHY (89 aa)) are alpha C-terminal domain (alpha-CTD).

Belongs to the RNA polymerase alpha chain family. Homodimer. The RNAP catalytic core consists of 2 alpha, 1 beta, 1 beta' and 1 omega subunit. When a sigma factor is associated with the core the holoenzyme is formed, which can initiate transcription.

The enzyme catalyses RNA(n) + a ribonucleoside 5'-triphosphate = RNA(n+1) + diphosphate. In terms of biological role, DNA-dependent RNA polymerase catalyzes the transcription of DNA into RNA using the four ribonucleoside triphosphates as substrates. This chain is DNA-directed RNA polymerase subunit alpha, found in Rhodopseudomonas palustris (strain HaA2).